Reading from the N-terminus, the 353-residue chain is O-antigen biosynthesis glycosyltransferase WclY (353 aa).

A helical transmembrane segment spans residues 116-136 (SLIGGLLWCSIWLFFDKLVIL). 2 residues coordinate UDP: asparagine 190 and glutamate 271. Positions 263-271 (EGFGLTVLE) match the E(x7)E motif.

It belongs to the glycosyltransferase group 1 family. Glycosyltransferase 4 subfamily.

The protein resides in the membrane. The protein operates within bacterial outer membrane biogenesis; LPS O-antigen biosynthesis. Activated by 5mM MnCl(2) and MgCl(2). No significant effect on activity by 5 mM ethylenediaminetetraacetic acid (EDTA), 0.125-0.5% Triton X-100 or dithiothreitol (DTT). Inhibited by 5 mM Zn-acetate. Its function is as follows. Involved in the assembly of the O-repeating unit during O-antigen biosynthesis. Glucosyltransferase accountable for the alpha-D-Glc-1,4-beta-D-Gal linkage within the O-antigen. Transfers alpha-1,4-Glc to the Gal moiety of a specific Gal-beta1-3GalNAc-alpha-OPO3-PO3-phenoxyundecyl (Gal-beta1-3GalNAc-PP-PhU) synthetic natural acceptor substrate analog. Requires both Gal-beta1-3GalNAc-alpha and the diphosphate moiety in the acceptor. Not active with GalNAc-PP-PhU, GlcNAc-PP-PhU, Gal-beta1-3GalNAc-alpha-O-benzyl, D-Rha-alpha1-3GlcNAc-alpha-PP-PhU or D-Man-alpha1-3Man-alpha-5-benzamidopentyl (BAP), nor with glycopeptides TTTVTP (Gal-beta1-3GalNAc-alpha-)TPTG or TT (Gal-beta1-3GalNAc-alpha-)TVTPTPTG as acceptor substrates. Has a broad nucleotide sugar donor substrate specificity with ADP-Glc, TDP-Glc and UDP-Glc as superior donors. Gal, GlcNAc, and GalNAc residues are transferred from UDP-sugars, but with low activity. UDP-Xyl, UDP-GlcA, GDP-Fuc or GDP-K-Rha do not act as donors. The polypeptide is O-antigen biosynthesis glycosyltransferase WclY (Escherichia coli).